The primary structure comprises 246 residues: tRNA (guanine-N(1)-)-methyltransferase (246 aa).

Residues Gly113 and 133 to 138 (IGDYVL) contribute to the S-adenosyl-L-methionine site.

Belongs to the RNA methyltransferase TrmD family. In terms of assembly, homodimer.

The protein localises to the cytoplasm. It catalyses the reaction guanosine(37) in tRNA + S-adenosyl-L-methionine = N(1)-methylguanosine(37) in tRNA + S-adenosyl-L-homocysteine + H(+). In terms of biological role, specifically methylates guanosine-37 in various tRNAs. The chain is tRNA (guanine-N(1)-)-methyltransferase from Yersinia enterocolitica serotype O:8 / biotype 1B (strain NCTC 13174 / 8081).